Consider the following 57-residue polypeptide: Potassium channel toxin alpha-KTx 8.5 (57 aa).

An N-terminal signal peptide occupies residues methionine 1–alanine 28. 3 disulfides stabilise this stretch: cysteine 31–cysteine 47, cysteine 34–cysteine 52, and cysteine 38–cysteine 54.

It belongs to the short scorpion toxin superfamily. Potassium channel inhibitor family. Alpha-KTx 08 subfamily. In terms of tissue distribution, expressed by the venom gland.

The protein resides in the secreted. Functionally, selectively inhibits voltage-gated potassium channels Kv1.2/KCNA2 (IC(50)=183 nM). The chain is Potassium channel toxin alpha-KTx 8.5 from Odontobuthus doriae (Yellow Iranian scorpion).